The primary structure comprises 276 residues: 2,3,4,5-tetrahydropyridine-2,6-dicarboxylate N-succinyltransferase (276 aa).

Residues arginine 108 and aspartate 145 each contribute to the substrate site.

The protein belongs to the transferase hexapeptide repeat family. In terms of assembly, homotrimer.

The protein localises to the cytoplasm. It carries out the reaction (S)-2,3,4,5-tetrahydrodipicolinate + succinyl-CoA + H2O = (S)-2-succinylamino-6-oxoheptanedioate + CoA. Its pathway is amino-acid biosynthesis; L-lysine biosynthesis via DAP pathway; LL-2,6-diaminopimelate from (S)-tetrahydrodipicolinate (succinylase route): step 1/3. This is 2,3,4,5-tetrahydropyridine-2,6-dicarboxylate N-succinyltransferase from Caulobacter vibrioides (strain ATCC 19089 / CIP 103742 / CB 15) (Caulobacter crescentus).